The following is a 182-amino-acid chain: CDP-diacylglycerol--glycerol-3-phosphate 3-phosphatidyltransferase (182 aa).

Topologically, residues 1 to 12 are cytoplasmic; sequence MQLNIPTWLTLF. Residues 13-37 form a helical membrane-spanning segment; it reads RVVLIPFFVLAFYLPFVWAPMVCAI. The Periplasmic portion of the chain corresponds to 38–60; sequence IFVFAAATDWFDGFLARRWKQTT. Residues 61–81 form a helical membrane-spanning segment; the sequence is RFGAFLDPVADKVMVAIALVL. Over 82–86 the chain is Cytoplasmic; the sequence is VAEHY. A helical membrane pass occupies residues 87-107; that stretch reads HVWWITLPAATMIAREIIISS. Topologically, residues 108-145 are periplasmic; that stretch reads LREWMAEIGKRSSVAVSWIGKVKTTAQMGSLVGLLWRP. A helical transmembrane segment spans residues 146–168; that stretch reads DHNIELASFVLLYIAAVLTFWSM. Topologically, residues 169–181 are cytoplasmic; the sequence is FQYLNAAWKDLLE.

It belongs to the CDP-alcohol phosphatidyltransferase class-I family.

Its subcellular location is the cell inner membrane. The enzyme catalyses a CDP-1,2-diacyl-sn-glycerol + sn-glycerol 3-phosphate = a 1,2-diacyl-sn-glycero-3-phospho-(1'-sn-glycero-3'-phosphate) + CMP + H(+). It functions in the pathway phospholipid metabolism; phosphatidylglycerol biosynthesis; phosphatidylglycerol from CDP-diacylglycerol: step 1/2. Catalyzes the conversion of cytidine diphosphate diacylglycerol (CDP-DG) and glycerol 3-phosphate into phosphatidylglycerol. Essential for the synthesis of anionic phospholipids, thereby playing a role in balancing the ratio of zwitterionic and anionic phospholipids, which is thought to be important for normal membrane function. In Yersinia enterocolitica serotype O:8 / biotype 1B (strain NCTC 13174 / 8081), this protein is CDP-diacylglycerol--glycerol-3-phosphate 3-phosphatidyltransferase.